A 59-amino-acid chain; its full sequence is Small ribosomal subunit protein eS17 (59 aa).

Belongs to the eukaryotic ribosomal protein eS17 family.

The polypeptide is Small ribosomal subunit protein eS17 (Halobacterium salinarum (strain ATCC 29341 / DSM 671 / R1)).